A 241-amino-acid polypeptide reads, in one-letter code: Glucosamine-6-phosphate deaminase (241 aa).

The Proton acceptor; for enolization step role is filled by Asp67. Asn136 functions as the For ring-opening step in the catalytic mechanism. The Proton acceptor; for ring-opening step role is filled by His138. Residue Glu143 is the For ring-opening step of the active site.

Belongs to the glucosamine/galactosamine-6-phosphate isomerase family. NagB subfamily.

The enzyme catalyses alpha-D-glucosamine 6-phosphate + H2O = beta-D-fructose 6-phosphate + NH4(+). The protein operates within amino-sugar metabolism; N-acetylneuraminate degradation; D-fructose 6-phosphate from N-acetylneuraminate: step 5/5. Catalyzes the reversible isomerization-deamination of glucosamine 6-phosphate (GlcN6P) to form fructose 6-phosphate (Fru6P) and ammonium ion. The sequence is that of Glucosamine-6-phosphate deaminase from Clostridium acetobutylicum (strain ATCC 824 / DSM 792 / JCM 1419 / IAM 19013 / LMG 5710 / NBRC 13948 / NRRL B-527 / VKM B-1787 / 2291 / W).